The chain runs to 189 residues: MKYRYFAKKSFLFISMLAAFKTFAFELPSVPFPAPGSDEILFVVRDATFNTNAPVNVKVSDFWTNRNVKRKPYKDVYGQSVFTTSGTKWLTSYMTVNINDKDYTMAAVSGYKRGHSAVFVKSDQVQLQHSYNSVANFVGEDEDSIPSKMYLDETPEYFVNVEAYESGSGNILVMCISNKESFFECEHQK.

The first 24 residues, 1–24 (MKYRYFAKKSFLFISMLAAFKTFA), serve as a signal peptide directing secretion. A disulfide bridge links Cys-175 with Cys-185.

Belongs to the TDH hemolysin family. As to quaternary structure, homodimer.

Its function is as follows. Bacterial hemolysins are exotoxins that attack blood cell membranes and cause cell rupture by mechanisms not clearly defined. This chain is Thermostable direct hemolysin-related (tdh3), found in Vibrio parahaemolyticus.